The following is a 247-amino-acid chain: MSGKDRIEIFPSRMAQTIMKARLKGAQTGRNLLKKKSDALTLRFRQILKKIIETKMLMGEVMREAAFSLAEAKFTAGDFSTTVIQNVNKAQVKIRAKKDNVAGVTLPVFEHYHEGTDSYELTGLARGGEQLAKLKRNYAKAVELLVELASLQTSFVTLDEAIKITNRRVNAIEHVIIPRIERTLAYIITELDEREREEFYRLKKIQEKKKIIKEKFEKDLERRRAAGEVMEPANLLAEEKDEDLLFE.

It belongs to the V-ATPase D subunit family. In terms of assembly, V-ATPase is a heteromultimeric enzyme made up of two complexes: the ATP-hydrolytic V1 complex and the proton translocation V0 complex. The V1 complex consists of three catalytic AB heterodimers that form a heterohexamer, three peripheral stalks each consisting of EG heterodimers, one central rotor including subunits D and F, and the regulatory subunits C and H. The proton translocation complex V0 consists of the proton transport subunit a, a ring of proteolipid subunits c9c'', rotary subunit d, subunits e and f, and the accessory subunits ATP6AP1/Ac45 and ATP6AP2/PRR. Interacts with SNX10.

It localises to the membrane. The protein resides in the cytoplasmic vesicle. The protein localises to the clathrin-coated vesicle membrane. Its subcellular location is the cytoplasm. It is found in the cytoskeleton. It localises to the microtubule organizing center. The protein resides in the centrosome. The protein localises to the cell projection. Its subcellular location is the cilium. Functionally, subunit of the V1 complex of vacuolar(H+)-ATPase (V-ATPase), a multisubunit enzyme composed of a peripheral complex (V1) that hydrolyzes ATP and a membrane integral complex (V0) that translocates protons. V-ATPase is responsible for acidifying and maintaining the pH of intracellular compartments and in some cell types, is targeted to the plasma membrane, where it is responsible for acidifying the extracellular environment. May play a role in cilium biogenesis through regulation of the transport and the localization of proteins to the cilium. The protein is V-type proton ATPase subunit D (Atp6v1d) of Mus musculus (Mouse).